The chain runs to 373 residues: CXADR-like membrane protein (373 aa).

A signal peptide spans 1–18; that stretch reads MSLLLLLLLVSYYVGTLG. Ig-like C2-type domains lie at 19–127 and 135–224; these read THTE…VILK and PKCE…VRVT. Topologically, residues 19-235 are extracellular; sequence THTEIKRVAE…QYVQSIGMVA (217 aa). Intrachain disulfides connect Cys-35–Cys-111 and Cys-153–Cys-208. Residues Asn-74 and Asn-197 are each glycosylated (N-linked (GlcNAc...) asparagine). A helical membrane pass occupies residues 236 to 256; the sequence is GAVTGIVAGALLIFLLVWLLI. The Cytoplasmic segment spans residues 257 to 373; that stretch reads RRKDKERYEE…PSQSRAFQTV (117 aa). Over residues 264-281 the composition is skewed to basic and acidic residues; that stretch reads YEEEERPNEIREDAEAPK. Positions 264–373 are disordered; that stretch reads YEEEERPNEI…PSQSRAFQTV (110 aa). Residues 288-314 show a composition bias toward low complexity; sequence SSSSSGSRSSRSGSSSTRSTANSASRS. The span at 355-373 shows a compositional bias: polar residues; sequence KAETTPSMIPSQSRAFQTV.

Predominantly expressed in epithelial cells within different tissues and in the white adipose tissue. Expressed at high levels in small intestine and placenta, at intermediate levels in the heart, skeletal muscle, colon, spleen, kidney and lung and at low levels in the liver and peripheral blood leukocytes. Highly abundant in the intestine during embryo and fetal development (at protein level).

It is found in the cell junction. Its subcellular location is the tight junction. It localises to the cell membrane. Its function is as follows. May be involved in the cell-cell adhesion. May play a role in adipocyte differentiation and development of obesity. Is required for normal small intestine development. The chain is CXADR-like membrane protein (CLMP) from Homo sapiens (Human).